We begin with the raw amino-acid sequence, 382 residues long: V-type proton ATPase subunit C 1 (382 aa).

An N-acetylthreonine modification is found at Thr2.

This sequence belongs to the V-ATPase C subunit family. As to quaternary structure, V-ATPase is a heteromultimeric enzyme made up of two complexes: the ATP-hydrolytic V1 complex and the proton translocation V0 complex. The V1 complex consists of three catalytic AB heterodimers that form a heterohexamer, three peripheral stalks each consisting of EG heterodimers, one central rotor including subunits D and F, and the regulatory subunits C and H. The proton translocation complex V0 consists of the proton transport subunit a, a ring of proteolipid subunits c9c'', rotary subunit d, subunits e and f, and the accessory subunits ATP6AP1/Ac45 and ATP6AP2/PRR. Expressed in brain (at protein level).

It is found in the cytoplasmic vesicle. Its subcellular location is the secretory vesicle. The protein resides in the synaptic vesicle membrane. The protein localises to the clathrin-coated vesicle membrane. Functionally, subunit of the V1 complex of vacuolar(H+)-ATPase (V-ATPase), a multisubunit enzyme composed of a peripheral complex (V1) that hydrolyzes ATP and a membrane integral complex (V0) that translocates protons. V-ATPase is responsible for acidifying and maintaining the pH of intracellular compartments and in some cell types, is targeted to the plasma membrane, where it is responsible for acidifying the extracellular environment. Subunit C is necessary for the assembly of the catalytic sector of the enzyme and is likely to have a specific function in its catalytic activity. The polypeptide is V-type proton ATPase subunit C 1 (Atp6v1c1) (Rattus norvegicus (Rat)).